We begin with the raw amino-acid sequence, 640 residues long: Threonine--tRNA ligase (640 aa).

The TGS domain occupies 1–61 (MLVVTLPDGS…DKDSQLAIIT (61 aa)). Positions 242–533 (DHRRLGKQLD…LIENHTGNMP (292 aa)) are catalytic. 3 residues coordinate Zn(2+): cysteine 333, histidine 384, and histidine 510.

The protein belongs to the class-II aminoacyl-tRNA synthetase family. In terms of assembly, homodimer. It depends on Zn(2+) as a cofactor.

It localises to the cytoplasm. The catalysed reaction is tRNA(Thr) + L-threonine + ATP = L-threonyl-tRNA(Thr) + AMP + diphosphate + H(+). In terms of biological role, catalyzes the attachment of threonine to tRNA(Thr) in a two-step reaction: L-threonine is first activated by ATP to form Thr-AMP and then transferred to the acceptor end of tRNA(Thr). Also edits incorrectly charged L-seryl-tRNA(Thr). This chain is Threonine--tRNA ligase, found in Polynucleobacter necessarius subsp. necessarius (strain STIR1).